The sequence spans 142 residues: Protein CPn_0742/CP_0003/CPj0742/CpB0770 (142 aa).

A disordered region spans residues 115–142 (LHPTKESKRPKQKLSSTKKNKKKNWIPL). Over residues 124–142 (PKQKLSSTKKNKKKNWIPL) the composition is skewed to basic residues.

The protein belongs to the chlamydial CPn_0742/CT_635/TC_0003 family.

This Chlamydia pneumoniae (Chlamydophila pneumoniae) protein is Protein CPn_0742/CP_0003/CPj0742/CpB0770.